We begin with the raw amino-acid sequence, 461 residues long: Photosystem II CP43 reaction center protein (461 aa).

Residues 1 to 2 (ME) constitute a propeptide that is removed on maturation. Position 3 is an N-acetylthreonine (Thr-3). Thr-3 carries the phosphothreonine modification. Transmembrane regions (helical) follow at residues 57–81 (LFEVAHFIPEKPMYEQGLILLPHLA), 122–143 (IIGPEVLEESFPFFGYDWKDKN), 166–188 (KAMFFGGVYDTWAPGGGDVRVIS), 243–263 (KPFSWARRALVWSGEAYLSYS), and 279–300 (WFNNTAYPSEFFGPTGPEASQA). Residue Glu-355 coordinates [CaMn4O5] cluster. The chain crosses the membrane as a helical span at residues 435–459 (RARAASGGFEKGLDRENEPVLSMKL).

This sequence belongs to the PsbB/PsbC family. PsbC subfamily. In terms of assembly, PSII is composed of 1 copy each of membrane proteins PsbA, PsbB, PsbC, PsbD, PsbE, PsbF, PsbH, PsbI, PsbJ, PsbK, PsbL, PsbM, PsbT, PsbX, PsbY, PsbZ, Psb30/Ycf12, at least 3 peripheral proteins of the oxygen-evolving complex and a large number of cofactors. It forms dimeric complexes. Binds multiple chlorophylls and provides some of the ligands for the Ca-4Mn-5O cluster of the oxygen-evolving complex. It may also provide a ligand for a Cl- that is required for oxygen evolution. PSII binds additional chlorophylls, carotenoids and specific lipids. is required as a cofactor.

The protein localises to the plastid. It is found in the cyanelle thylakoid membrane. Its function is as follows. One of the components of the core complex of photosystem II (PSII). It binds chlorophyll and helps catalyze the primary light-induced photochemical processes of PSII. PSII is a light-driven water:plastoquinone oxidoreductase, using light energy to abstract electrons from H(2)O, generating O(2) and a proton gradient subsequently used for ATP formation. The sequence is that of Photosystem II CP43 reaction center protein from Cyanophora paradoxa.